We begin with the raw amino-acid sequence, 357 residues long: Tetraacyldisaccharide 4'-kinase (357 aa).

Position 49–56 (49–56 (TIGGTGKT)) interacts with ATP.

It belongs to the LpxK family.

It catalyses the reaction a lipid A disaccharide + ATP = a lipid IVA + ADP + H(+). It participates in glycolipid biosynthesis; lipid IV(A) biosynthesis; lipid IV(A) from (3R)-3-hydroxytetradecanoyl-[acyl-carrier-protein] and UDP-N-acetyl-alpha-D-glucosamine: step 6/6. Its function is as follows. Transfers the gamma-phosphate of ATP to the 4'-position of a tetraacyldisaccharide 1-phosphate intermediate (termed DS-1-P) to form tetraacyldisaccharide 1,4'-bis-phosphate (lipid IVA). The protein is Tetraacyldisaccharide 4'-kinase of Porphyromonas gingivalis (strain ATCC BAA-308 / W83).